The sequence spans 440 residues: P47(GAG-CRK) protein (440 aa).

Residues 1-208 are gag first part; sequence MEAVIKVISS…TPRGAEQPRA (208 aa). The short motif at 174-177 is the PPXY motif element; that stretch reads PPPY. The disordered stretch occupies residues 183–230; the sequence is YPSLAGVGEQQGQGGDTPRGAEQPRAGRGAGHRGLRRPAGRGQRVRPA. The CRK stretch occupies residues 209–437; the sequence is GRGAGHRGLR…PSSASVSTLT (229 aa). Over residues 212-221 the composition is skewed to basic residues; sequence AGHRGLRRPA. Residues 248 to 354 form the SH2 domain; it reads WYWGRLSRGD…LDTTTLIEPV (107 aa). The SH3 domain occupies 368-428; the sequence is EEVEYVRALF…PVPYVEKCRP (61 aa). A gag second part region spans residues 438–440; sequence GGR.

This is P47(GAG-CRK) protein from Avian sarcoma virus CT10 (Avian sarcoma virus (strain CT10)).